The sequence spans 114 residues: Amphinase-2 (114 aa).

The Proton acceptor role is filled by His15. Intrachain disulfides connect Cys26–Cys79, Cys41–Cys85, Cys59–Cys100, and Cys97–Cys114. The N-linked (GlcNAc...) asparagine glycan is linked to Asn27. Position 42 to 46 (Lys42 to Thr46) interacts with substrate. Residues Asn67 and Asn91 are each glycosylated (N-linked (GlcNAc...) asparagine). The active-site Proton donor is His107.

The protein belongs to the pancreatic ribonuclease family. In terms of assembly, monomer. Post-translationally, there are at least four different forms arising from glycan heterogeneity.

It is found in the secreted. In terms of biological role, endonuclease, hydrolyzes highly polymerized RNA, poly(U) and poly(C), and the dinucleotides CpA and UpA. Hydrolyzes 18S and 28S ribosomal RNA. More active towards rCA than rUA or rUG. Has cytotoxic activity against cultured human submaxillary gland carcinoma cells. The protein is Amphinase-2 of Lithobates pipiens (Northern leopard frog).